Reading from the N-terminus, the 266-residue chain is Indole-3-glycerol phosphate synthase (266 aa).

Belongs to the TrpC family.

The enzyme catalyses 1-(2-carboxyphenylamino)-1-deoxy-D-ribulose 5-phosphate + H(+) = (1S,2R)-1-C-(indol-3-yl)glycerol 3-phosphate + CO2 + H2O. Its pathway is amino-acid biosynthesis; L-tryptophan biosynthesis; L-tryptophan from chorismate: step 4/5. This Opitutus terrae (strain DSM 11246 / JCM 15787 / PB90-1) protein is Indole-3-glycerol phosphate synthase.